Consider the following 170-residue polypeptide: Arginine repressor (170 aa).

It belongs to the ArgR family.

Its subcellular location is the cytoplasm. It participates in amino-acid biosynthesis; L-arginine biosynthesis [regulation]. Regulates arginine biosynthesis genes. The sequence is that of Arginine repressor from Mycobacterium tuberculosis (strain ATCC 25177 / H37Ra).